The sequence spans 1103 residues: Voltage-dependent calcium channel subunit alpha-2/delta-1 (1103 aa).

Residues 1–24 (MAAGCLLALTLTLFQSLLIGPSSE) form the signal peptide. Topologically, residues 25-1073 (EPFPSAVTIK…VLEDYTDCGG (1049 aa)) are extracellular. Asn-92 carries N-linked (GlcNAc...) asparagine glycosylation. A Phosphoserine modification is found at Ser-119. N-linked (GlcNAc...) asparagine glycosylation is found at Asn-136 and Asn-184. In terms of domain architecture, VWFA spans 253 to 430 (DMLILVDVSG…INTQEYLDVL (178 aa)). A divalent metal cation contacts are provided by Asp-259, Ser-261, and Ser-263. Positions 259–263 (DVSGS) match the MIDAS-like motif motif. N-linked (GlcNAc...) asparagine glycosylation is found at Asn-324, Asn-348, Asn-468, Asn-475, Asn-604, Asn-613, Asn-675, Asn-781, Asn-824, Asn-888, Asn-895, Asn-985, and Asn-998. An intrachain disulfide couples Cys-404 to Cys-1059. The 111-residue stretch at 446–556 (WTNVYLDALE…NIQNPKSQEP (111 aa)) folds into the Cache domain. The chain crosses the membrane as a helical span at residues 1074-1094 (VSGLNPSLWYIIGIQFLLLWL). The Cytoplasmic portion of the chain corresponds to 1095–1103 (VSGSTHRLL).

It belongs to the calcium channel subunit alpha-2/delta family. As to quaternary structure, dimer formed of alpha-2-1 and delta-1 chains; disulfide-linked. Voltage-dependent calcium channels are multisubunit complexes, consisting of alpha-1 (CACNA1), alpha-2 (CACNA2D), beta (CACNB) and delta (CACNA2D) subunits in a 1:1:1:1 ratio. Post-translationally, proteolytically processed into subunits alpha-2-1 and delta-1 that are disulfide-linked. Isoform 1 is expressed in skeletal muscle. Isoform 2 is expressed in the central nervous system. Isoform 2, isoform 4 and isoform 5 are expressed in neuroblastoma cells. Isoform 3, isoform 4 and isoform 5 are expressed in the aorta.

The protein localises to the membrane. Its subcellular location is the cell membrane. In terms of biological role, the alpha-2/delta subunit of voltage-dependent calcium channels regulates calcium current density and activation/inactivation kinetics of the calcium channel. Plays an important role in excitation-contraction coupling. The chain is Voltage-dependent calcium channel subunit alpha-2/delta-1 (CACNA2D1) from Homo sapiens (Human).